Here is a 180-residue protein sequence, read N- to C-terminus: NAD(P)H-quinone oxidoreductase subunit I, chloroplastic (180 aa).

4Fe-4S ferredoxin-type domains lie at 55 to 84 (GRIH…VDWR) and 95 to 124 (LNYS…MTEE). [4Fe-4S] cluster-binding residues include Cys-64, Cys-67, Cys-70, Cys-74, Cys-104, Cys-107, Cys-110, and Cys-114.

This sequence belongs to the complex I 23 kDa subunit family. NDH is composed of at least 16 different subunits, 5 of which are encoded in the nucleus. [4Fe-4S] cluster is required as a cofactor.

Its subcellular location is the plastid. It is found in the chloroplast thylakoid membrane. The enzyme catalyses a plastoquinone + NADH + (n+1) H(+)(in) = a plastoquinol + NAD(+) + n H(+)(out). It carries out the reaction a plastoquinone + NADPH + (n+1) H(+)(in) = a plastoquinol + NADP(+) + n H(+)(out). NDH shuttles electrons from NAD(P)H:plastoquinone, via FMN and iron-sulfur (Fe-S) centers, to quinones in the photosynthetic chain and possibly in a chloroplast respiratory chain. The immediate electron acceptor for the enzyme in this species is believed to be plastoquinone. Couples the redox reaction to proton translocation, and thus conserves the redox energy in a proton gradient. The polypeptide is NAD(P)H-quinone oxidoreductase subunit I, chloroplastic (Liriodendron tulipifera (Tuliptree)).